A 93-amino-acid polypeptide reads, in one-letter code: Small ribosomal subunit protein uS19 (93 aa).

The protein belongs to the universal ribosomal protein uS19 family.

In terms of biological role, protein S19 forms a complex with S13 that binds strongly to the 16S ribosomal RNA. The protein is Small ribosomal subunit protein uS19 of Alkaliphilus metalliredigens (strain QYMF).